Consider the following 360-residue polypeptide: Alkanal monooxygenase alpha chain (360 aa).

Belongs to the bacterial luciferase oxidoreductase family. In terms of assembly, heterodimer of an alpha and a beta chain.

It catalyses the reaction a long-chain fatty aldehyde + FMNH2 + O2 = a long-chain fatty acid + hnu + FMN + H2O + 2 H(+). Light-emitting reaction in luminous bacteria. This Photorhabdus luminescens (Xenorhabdus luminescens) protein is Alkanal monooxygenase alpha chain (luxA).